Consider the following 263-residue polypeptide: Alpha-tubulin N-acetyltransferase 2 (263 aa).

The 181-residue stretch at 1–181 folds into the N-acetyltransferase domain; the sequence is MEIAFDLSSI…NKYAVFPNFF (181 aa). 115–128 provides a ligand contact to acetyl-CoA; the sequence is FFIVPTEQRSGNGF. 2 disordered regions span residues 191-224 and 236-263; these read TPRQ…RPRH and FPRG…EPIW. Low complexity predominate over residues 200-212; that stretch reads RASSAVSSHTTSR. Positions 253–263 are enriched in basic and acidic residues; the sequence is LTRDQRHEPIW.

This sequence belongs to the acetyltransferase ATAT1 family.

It catalyses the reaction L-lysyl-[alpha-tubulin] + acetyl-CoA = N(6)-acetyl-L-lysyl-[alpha-tubulin] + CoA + H(+). Functionally, specifically acetylates 'Lys-40' in alpha-tubulin/mec-12 on the lumenal side of microtubules. Promotes microtubule destabilization and accelerates microtubule dynamics; this activity may be independent of acetylation activity. Acetylates alpha-tubulin with a slow enzymatic rate, due to a catalytic site that is not optimized for acetyl transfer. Enters the microtubule through each end and diffuses quickly throughout the lumen of microtubules. Acetylates only long/old microtubules because of its slow acetylation rate since it does not have time to act on dynamically unstable microtubules before the enzyme is released. Required for the maintenance of touch receptor neurons and possibly other type of neurons involved in locomotion. This is Alpha-tubulin N-acetyltransferase 2 (atat-2) from Caenorhabditis briggsae.